A 376-amino-acid chain; its full sequence is Flagellin B (376 aa).

Residues 103-129 adopt a coiled-coil conformation; it reads SNSSSERRAIQEEVSALNDELNRIAET.

The protein belongs to the bacterial flagellin family. In terms of assembly, heteromer of multiple flagellin subunits including FlaA, FlaB, FlaC, FlaD and FlaE.

It localises to the secreted. The protein resides in the bacterial flagellum. In terms of biological role, flagellin is the subunit protein which polymerizes to form the filaments of bacterial flagella. FlaB is not essential for flagellar synthesis and motility. This chain is Flagellin B (flaB), found in Vibrio cholerae serotype O1 (strain ATCC 39541 / Classical Ogawa 395 / O395).